The primary structure comprises 288 residues: MEFLYTYETLKLEFPLVEPEKARFILLGVPFDGTTSYKAGARFGPTLIRQATLNLESYILDYDLDIAELPIADIGDIAVVAGDPRKTADRVRETLEELKKANPKAIPILLGGEHSQTLGAVEALKPASYVVFDAHLDLRNSYEDNPYNHACVARRISELGVKEAIFGIRSGTKEEVDFARERDIPWVHARDYSFDAFVDLVEALPEPVYLSIDIDVFDLSMVPSTGTPEAGGLRFWEVVEAIEWLVEKKEIAGFDIMEVAGEKLGDPTALTAAKLLFYSIGAMAKFGR.

Residues His114, Asp133, His135, Asp137, Asp213, and Asp215 each coordinate Mn(2+).

It belongs to the arginase family. It depends on Mn(2+) as a cofactor.

The protein resides in the cytoplasm. The enzyme catalyses N(1)-(3-aminopropyl)agmatine + H2O = urea + spermidine. It carries out the reaction agmatine + H2O = urea + putrescine. It functions in the pathway amine and polyamine biosynthesis; spermidine biosynthesis. In terms of biological role, involved in the biosynthesis of polyamines which are thought to support the growth of thermophilic microorganisms under high-temperature conditions. It seems that long-chain and branched-chain of polyamines effectively stabilize DNA and RNA, respectively. Catalyzes the decarboxylation of N1-(3-aminopropyl)agmatine to yield spermidine and urea. It can also use agmatine to yield putrescine. The protein is N(1)-aminopropylagmatine ureohydrolase of Thermococcus kodakarensis (strain ATCC BAA-918 / JCM 12380 / KOD1) (Pyrococcus kodakaraensis (strain KOD1)).